A 187-amino-acid chain; its full sequence is KS71A fimbrillin (187 aa).

An N-terminal signal peptide occupies residues Met1 to Ala21. Cys43 and Cys82 are joined by a disulfide.

This sequence belongs to the fimbrial protein family.

It is found in the fimbrium. Functionally, fimbriae (also called pili), polar filaments radiating from the surface of the bacterium to a length of 0.5-1.5 micrometers and numbering 100-300 per cell, enable bacteria to colonize the epithelium of specific host organs. In Escherichia coli, this protein is KS71A fimbrillin (KS71A).